An 88-amino-acid chain; its full sequence is Protein Aeq5-like1 (88 aa).

The first 20 residues, 1–20 (MKSVIAVLVLSLVLVNFTQA), serve as a signal peptide directing secretion. 4 disulfide bridges follow: C29–C68, C33–C64, C40–C56, and C47–C53.

Is expressed in the ectodermal cells of gastrulae and planulae. Is also noticeable in the endoderm in late planulae. In the primary polyps, is expressed in both ectoderm (sensory neurons) and endoderm (ganglions). Is not expressed in nematocytes.

Functionally, probable neuropeptide. The protein is Protein Aeq5-like1 of Nematostella vectensis (Starlet sea anemone).